The primary structure comprises 348 residues: Quinone oxidoreductase-like protein 1 (348 aa).

This sequence belongs to the zinc-containing alcohol dehydrogenase family. Quinone oxidoreductase subfamily. Component of the FERRY complex composed of five subunits, TBCK, PPP1R21, FERRY3, CRYZL1 and GATD1 with a ratio of 1:2:1:2:4, respectively.

The protein resides in the early endosome. Functionally, component of the FERRY complex (Five-subunit Endosomal Rab5 and RNA/ribosome intermediary). The FERRY complex directly interacts with mRNAs and RAB5A, and functions as a RAB5A effector involved in the localization and the distribution of specific mRNAs most likely by mediating their endosomal transport. The complex recruits mRNAs and ribosomes to early endosomes through direct mRNA-interaction. This is Quinone oxidoreductase-like protein 1 (Cryzl1) from Mus musculus (Mouse).